Reading from the N-terminus, the 382-residue chain is ATP phosphoribosyltransferase regulatory subunit (382 aa).

Belongs to the class-II aminoacyl-tRNA synthetase family. HisZ subfamily. As to quaternary structure, heteromultimer composed of HisG and HisZ subunits.

The protein localises to the cytoplasm. It participates in amino-acid biosynthesis; L-histidine biosynthesis; L-histidine from 5-phospho-alpha-D-ribose 1-diphosphate: step 1/9. In terms of biological role, required for the first step of histidine biosynthesis. May allow the feedback regulation of ATP phosphoribosyltransferase activity by histidine. The chain is ATP phosphoribosyltransferase regulatory subunit from Burkholderia multivorans (strain ATCC 17616 / 249).